The chain runs to 283 residues: Plasma membrane ascorbate-dependent reductase CYBRD1 (283 aa).

Over 1 to 5 the chain is Cytoplasmic; that stretch reads MEGYK. The helical transmembrane segment at 6–30 threads the bilayer; it reads SFLAFLVSSLLLGFLGVIFTLVWVL. The Cytochrome b561 domain maps to 13–218; that stretch reads SSLLLGFLGV…FGGLVVWMVT (206 aa). Topologically, residues 31–45 are extracellular; that stretch reads HWREGLGWDGGAAEF. A helical transmembrane segment spans residues 46–67; it reads NWHPVLVTSGFIFIQGIAIIVY. Heme b contacts are provided by histidine 48, arginine 68, and lysine 77. Over 68–76 the chain is Cytoplasmic; that stretch reads RLPWTWKCS. Lysine 77 and lysine 81 together coordinate L-ascorbate. A helical transmembrane segment spans residues 77 to 103; the sequence is KLLMKFIHAGLHLTALIFTIVALVAVF. Histidine 84 is a heme b binding site. Topologically, residues 104–116 are extracellular; it reads DFHNAKNIPNMYS. Histidine 106 is a binding site for Fe(3+). Heme b-binding positions include 113–116 and histidine 118; that span reads NMYS. Residues 117–142 form a helical membrane-spanning segment; sequence LHSWIGLTVVILYALQLVLGVSIYLL. Residues 143–149 lie on the Cytoplasmic side of the membrane; it reads PFASNTL. An L-ascorbate-binding site is contributed by arginine 150. Residues 150 to 177 form a helical membrane-spanning segment; sequence RAALMPVHVYSGLFIFGTVIATALMGIT. Histidine 157 and glutamate 178 together coordinate heme b. Topologically, residues 178-195 are extracellular; it reads EKLIFSLKEPPYSKLPPE. A helical transmembrane segment spans residues 196–220; that stretch reads AIFVNTFGLLILVFGGLVVWMVTTP. Topologically, residues 221–283 are cytoplasmic; the sequence is AWKRPREQGM…LDEAGQRSTM (63 aa). Position 223 (lysine 223) interacts with heme b. Residues 234 to 262 form a disordered region; sequence SPTVSSPDETEEGSTITDCSNTEKSDVEL. Residues 235–253 show a composition bias toward polar residues; sequence PTVSSPDETEEGSTITDCS.

Homodimer. It depends on heme b as a cofactor.

The protein resides in the cell membrane. Its subcellular location is the apical cell membrane. It catalyses the reaction Fe(3+)(out) + L-ascorbate(in) = monodehydro-L-ascorbate radical(in) + Fe(2+)(out) + H(+). The catalysed reaction is Cu(2+)(out) + L-ascorbate(in) = Cu(+)(out) + monodehydro-L-ascorbate radical(in) + H(+). It carries out the reaction monodehydro-L-ascorbate radical(out) + L-ascorbate(in) = monodehydro-L-ascorbate radical(in) + L-ascorbate(out). In terms of biological role, plasma membrane reductase that uses cytoplasmic ascorbate as an electron donor to reduce extracellular Fe(3+) into Fe(2+). It is also able to reduce extracellular monodehydro-L-ascorbate and may be involved in extracellular ascorbate regeneration. May also function as a cupric transmembrane reductase. In Xenopus laevis (African clawed frog), this protein is Plasma membrane ascorbate-dependent reductase CYBRD1 (cybrd1).